A 235-amino-acid polypeptide reads, in one-letter code: Segregation and condensation protein A (235 aa).

It belongs to the ScpA family. As to quaternary structure, component of a cohesin-like complex composed of ScpA, ScpB and the Smc homodimer, in which ScpA and ScpB bind to the head domain of Smc. The presence of the three proteins is required for the association of the complex with DNA.

The protein localises to the cytoplasm. Participates in chromosomal partition during cell division. May act via the formation of a condensin-like complex containing Smc and ScpB that pull DNA away from mid-cell into both cell halves. The polypeptide is Segregation and condensation protein A (Streptococcus uberis (strain ATCC BAA-854 / 0140J)).